Consider the following 235-residue polypeptide: UPF0714 protein YmaC (235 aa).

The chain crosses the membrane as a helical span at residues 5-24 (LLNVILVLAIVLFLRYVHYS).

Belongs to the UPF0714 family.

The protein resides in the cell membrane. In Bacillus subtilis (strain 168), this protein is UPF0714 protein YmaC (ymaC).